A 565-amino-acid chain; its full sequence is Polycomb protein EED (565 aa).

WD repeat units lie at residues 89–133 (DDGN…LYRT), 136–176 (GHGG…EKQP), 185–224 (GHSYDLLSVAFHDNGRYVLSAGHDQVINLWALPEFPNEHM), and 240–278 (IHNNLVDCVAFYGDLILSRACHEDTIVLWRIEGFSSDDP). Residues 417 to 488 (VKKAPGAAGS…SASPDPDSPF (72 aa)) form a disordered region. Residues 429-450 (GTAANGGHNNNNNNNNNNNNNN) show a composition bias toward low complexity. The segment covering 451-468 (HETGSQRSFSATNNLSNS) has biased composition (polar residues). Residues 519-559 (IDGAFVGRQVGWSPEGEWCVVVGNGNRALIYQRWGKERGLG) form a WD 5 repeat.

Belongs to the WD repeat ESC family. As to quaternary structure, component of the polycomb repressive complex 2 (PRC2) that consists of four core subunits icluding EZH2, EED, SUZ12, and RBBP4, among which EZH2 is the catalytic subunit and which minimally requires EED and SUZ12 for catalysis.

Its subcellular location is the nucleus. Component of the of the Polycomb Repressive Complex 2 (PRC2), a histone H3 lysine methyltransferase responsible for generating mono-, di-, and tri-methylation on Lys27 (H3K27me1, H3K27me2 and H3K27me3). The tri-methylated form is known to be critical in gene repression, and its proper placement is essential in defining repression patterns during development. EED is not a catalytic subunit but is required for the complex regulation of histone H3 lysine methylation by EZH2. This Chaetomium thermophilum (strain DSM 1495 / CBS 144.50 / IMI 039719) (Thermochaetoides thermophila) protein is Polycomb protein EED.